Consider the following 177-residue polypeptide: Large ribosomal subunit protein uL6 (177 aa).

It belongs to the universal ribosomal protein uL6 family. As to quaternary structure, part of the 50S ribosomal subunit.

This protein binds to the 23S rRNA, and is important in its secondary structure. It is located near the subunit interface in the base of the L7/L12 stalk, and near the tRNA binding site of the peptidyltransferase center. The polypeptide is Large ribosomal subunit protein uL6 (Aliivibrio salmonicida (strain LFI1238) (Vibrio salmonicida (strain LFI1238))).